We begin with the raw amino-acid sequence, 810 residues long: Transmembrane channel-like protein 6 (810 aa).

A disordered region spans residues Met1–Glu26. The Lumenal segment spans residues Met1 to Arg205. The span at Thr15–Glu26 shows a compositional bias: acidic residues. Position 88 is a phosphothreonine (Thr88). Arg93 carries the omega-N-methylarginine modification. Asn102 is a glycosylation site (N-linked (GlcNAc...) asparagine). At Thr104 the chain carries Phosphothreonine. Ser136 carries the phosphoserine modification. A helical transmembrane segment spans residues Tyr206–Ala226. Residues Arg227–Thr253 are Cytoplasmic-facing. Residues Leu254–Ala274 form a helical membrane-spanning segment. The Lumenal segment spans residues Ala275–Met338. N-linked (GlcNAc...) asparagine glycosylation is present at Asn311. The helical transmembrane segment at Pro339 to Tyr359 threads the bilayer. The Cytoplasmic segment spans residues Ser360–Gln429. A helical membrane pass occupies residues Val430–Ala450. Residues Val451–Gly468 lie on the Lumenal side of the membrane. Residues Val469–Phe489 traverse the membrane as a helical segment. Residues Arg490 to Glu504 lie on the Cytoplasmic side of the membrane. The chain crosses the membrane as a helical span at residues Val505–Tyr525. The Lumenal portion of the chain corresponds to His526–Met552. Residues Val553 to Ile573 traverse the membrane as a helical segment. Topologically, residues Ser574–Trp603 are cytoplasmic. The helical transmembrane segment at Leu604–Phe624 threads the bilayer. At His625 to Thr649 the chain is on the lumenal side. The chain crosses the membrane as a helical span at residues Val650 to Ala670. At Val671–Thr721 the chain is on the cytoplasmic side. A helical membrane pass occupies residues Phe722–Val742. At Lys743–Pro810 the chain is on the lumenal side. The segment at Glu775–Pro810 is disordered. The span at Ala793–Pro810 shows a compositional bias: basic and acidic residues.

The protein belongs to the TMC family. Interacts with TMC8. Interacts and forms a complex with TMC8 and CIB1; the interaction stabilizes each component of the complex. Interacts and forms a complex with TMC8 and SLC30A1/ZNT1; the interaction regulates zinc transport into the ER. As to expression, widely expressed. Highly expressed in thymus, lung and spleen. Expressed in lymphocytes and peripheral lymphocytes. Expressed in small and medium dorsal root ganglion (DRG) neurons.

It is found in the endoplasmic reticulum membrane. In terms of biological role, acts as a regulatory protein involved in the regulation of numerous cellular processes. Together with its homolog TMC8/EVER2, forms a complex with calcium-binding protein CIB1 in lymphocytes and keratynocytes where TMC6 and TMC8 stabilize CIB1 and reciprocally. Together with TMC8, also forms a complex with and activates zinc transporter ZNT1 at the ER membrane of keratynocytes, thereby facilitating zinc uptake into the ER. Down-regulates the activity of transcription factors induced by zinc and cytokines. Also plays a role in thermal sensation by inhibiting the M-channel (KCNQ2-KCNQ3 channel) current in primary sensory neurons. The polypeptide is Transmembrane channel-like protein 6 (Mus musculus (Mouse)).